Reading from the N-terminus, the 807-residue chain is uncharacterized protein (807 aa).

Positions 281 to 566 (IIQSLKSEEF…DKILFLGTNI (286 aa)) constitute a Reverse transcriptase domain.

It is found in the mitochondrion. This is an uncharacterized protein from Schizosaccharomyces pombe (strain 972 / ATCC 24843) (Fission yeast).